The sequence spans 505 residues: RNA-splicing ligase RtcB homolog (505 aa).

Mn(2+) is bound by residues D119, C122, H227, H259, and H353. Residue 226–230 (NHYAE) coordinates GMP. GMP is bound by residues 353–354 (HN), 402–405 (GGTM), S409, 428–431 (HGAG), and K504. The active-site GMP-histidine intermediate is the H428.

This sequence belongs to the RtcB family. Catalytic component of the tRNA-splicing ligase complex. It depends on Mn(2+) as a cofactor.

It catalyses the reaction a 3'-end 3'-phospho-ribonucleotide-RNA + a 5'-end dephospho-ribonucleoside-RNA + GTP = a ribonucleotidyl-ribonucleotide-RNA + GMP + diphosphate. The enzyme catalyses a 3'-end 2',3'-cyclophospho-ribonucleotide-RNA + a 5'-end dephospho-ribonucleoside-RNA + GTP + H2O = a ribonucleotidyl-ribonucleotide-RNA + GMP + diphosphate + H(+). Functionally, catalytic subunit of the tRNA-splicing ligase complex that acts by directly joining spliced tRNA halves to mature-sized tRNAs by incorporating the precursor-derived splice junction phosphate into the mature tRNA as a canonical 3',5'-phosphodiester. May act as an RNA ligase with broad substrate specificity, and may function toward other RNAs. The polypeptide is RNA-splicing ligase RtcB homolog (Nematostella vectensis (Starlet sea anemone)).